Reading from the N-terminus, the 526-residue chain is Peptide chain release factor 3 (526 aa).

In terms of domain architecture, tr-type G spans Asp9 to Leu277. GTP is bound by residues Ser18–Thr25, Asp86–His90, and Asn140–Asp143.

It belongs to the TRAFAC class translation factor GTPase superfamily. Classic translation factor GTPase family. PrfC subfamily.

Its subcellular location is the cytoplasm. Its function is as follows. Increases the formation of ribosomal termination complexes and stimulates activities of RF-1 and RF-2. It binds guanine nucleotides and has strong preference for UGA stop codons. It may interact directly with the ribosome. The stimulation of RF-1 and RF-2 is significantly reduced by GTP and GDP, but not by GMP. This Shewanella baltica (strain OS223) protein is Peptide chain release factor 3.